The following is a 571-amino-acid chain: Proline--tRNA ligase (571 aa).

This sequence belongs to the class-II aminoacyl-tRNA synthetase family. ProS type 1 subfamily. Homodimer.

The protein localises to the cytoplasm. It catalyses the reaction tRNA(Pro) + L-proline + ATP = L-prolyl-tRNA(Pro) + AMP + diphosphate. Functionally, catalyzes the attachment of proline to tRNA(Pro) in a two-step reaction: proline is first activated by ATP to form Pro-AMP and then transferred to the acceptor end of tRNA(Pro). As ProRS can inadvertently accommodate and process non-cognate amino acids such as alanine and cysteine, to avoid such errors it has two additional distinct editing activities against alanine. One activity is designated as 'pretransfer' editing and involves the tRNA(Pro)-independent hydrolysis of activated Ala-AMP. The other activity is designated 'posttransfer' editing and involves deacylation of mischarged Ala-tRNA(Pro). The misacylated Cys-tRNA(Pro) is not edited by ProRS. The sequence is that of Proline--tRNA ligase from Pseudomonas fluorescens (strain ATCC BAA-477 / NRRL B-23932 / Pf-5).